The chain runs to 130 residues: Small ribosomal subunit protein uS9 (130 aa).

Belongs to the universal ribosomal protein uS9 family.

This Streptococcus gordonii (strain Challis / ATCC 35105 / BCRC 15272 / CH1 / DL1 / V288) protein is Small ribosomal subunit protein uS9.